A 243-amino-acid chain; its full sequence is Ribosomal RNA small subunit methyltransferase G (243 aa).

S-adenosyl-L-methionine is bound by residues G82, F87, 133–134, and R152; that span reads AE.

This sequence belongs to the methyltransferase superfamily. RNA methyltransferase RsmG family.

It is found in the cytoplasm. Its function is as follows. Specifically methylates the N7 position of a guanine in 16S rRNA. The protein is Ribosomal RNA small subunit methyltransferase G of Clostridium novyi (strain NT).